The sequence spans 264 residues: Hydroxyethylthiazole kinase (264 aa).

Methionine 43 lines the substrate pocket. Residues arginine 119 and threonine 165 each contribute to the ATP site. Glycine 192 serves as a coordination point for substrate.

The protein belongs to the Thz kinase family. Requires Mg(2+) as cofactor.

It carries out the reaction 5-(2-hydroxyethyl)-4-methylthiazole + ATP = 4-methyl-5-(2-phosphooxyethyl)-thiazole + ADP + H(+). The protein operates within cofactor biosynthesis; thiamine diphosphate biosynthesis; 4-methyl-5-(2-phosphoethyl)-thiazole from 5-(2-hydroxyethyl)-4-methylthiazole: step 1/1. In terms of biological role, catalyzes the phosphorylation of the hydroxyl group of 4-methyl-5-beta-hydroxyethylthiazole (THZ). The protein is Hydroxyethylthiazole kinase of Anoxybacillus flavithermus (strain DSM 21510 / WK1).